A 252-amino-acid chain; its full sequence is Ubiquinone biosynthesis O-methyltransferase (252 aa).

S-adenosyl-L-methionine-binding residues include Arg-45, Gly-76, Asp-97, and Met-141.

Belongs to the methyltransferase superfamily. UbiG/COQ3 family.

The enzyme catalyses a 3-demethylubiquinol + S-adenosyl-L-methionine = a ubiquinol + S-adenosyl-L-homocysteine + H(+). The catalysed reaction is a 3-(all-trans-polyprenyl)benzene-1,2-diol + S-adenosyl-L-methionine = a 2-methoxy-6-(all-trans-polyprenyl)phenol + S-adenosyl-L-homocysteine + H(+). Its pathway is cofactor biosynthesis; ubiquinone biosynthesis. O-methyltransferase that catalyzes the 2 O-methylation steps in the ubiquinone biosynthetic pathway. This Caulobacter sp. (strain K31) protein is Ubiquinone biosynthesis O-methyltransferase.